The following is a 544-amino-acid chain: Chaperonin GroEL (544 aa).

ATP contacts are provided by residues 29–32 (TMGP), K50, 86–90 (DGTTT), G414, 477–479 (NAV), and D493.

This sequence belongs to the chaperonin (HSP60) family. As to quaternary structure, forms a cylinder of 14 subunits composed of two heptameric rings stacked back-to-back. Interacts with the co-chaperonin GroES.

It localises to the cytoplasm. It catalyses the reaction ATP + H2O + a folded polypeptide = ADP + phosphate + an unfolded polypeptide.. Together with its co-chaperonin GroES, plays an essential role in assisting protein folding. The GroEL-GroES system forms a nano-cage that allows encapsulation of the non-native substrate proteins and provides a physical environment optimized to promote and accelerate protein folding. This chain is Chaperonin GroEL, found in Campylobacter curvus (strain 525.92).